A 217-amino-acid polypeptide reads, in one-letter code: uncharacterized protein (217 aa).

Disordered regions lie at residues 1–85 (MGVK…RGNT) and 167–189 (KLRS…EPDE). Over residues 38 to 48 (AKSDKDKRKGS) the composition is skewed to basic and acidic residues. Residues 60-78 (NALPTKNLTTPPALNPLTT) are compositionally biased toward low complexity. Over residues 172–189 (PHKDQHNSATNKDQEPDE) the composition is skewed to basic and acidic residues.

This is an uncharacterized protein from Saccharomyces cerevisiae (strain ATCC 204508 / S288c) (Baker's yeast).